A 463-amino-acid polypeptide reads, in one-letter code: Mitochondrial dynamics protein MID49 (463 aa).

Topologically, residues 1–24 are mitochondrial intermembrane; the sequence is MAELQIRKKEKKSGDGIGTMVDFL. The chain crosses the membrane as a helical span at residues 25–47; that stretch reads LANARLVLGVGGAAMLGIATLAV. The Cytoplasmic segment spans residues 48–463; the sequence is KRLIDRATSP…EPDDVLKRER (416 aa). Positions 87 to 119 are disordered; that stretch reads TLRRKEDLEHHCAPLSLPDPSQKMPEATGTSQV. Residues 89–98 show a composition bias toward basic and acidic residues; that stretch reads RRKEDLEHHC.

This sequence belongs to the MID49/MID51 family.

The protein localises to the mitochondrion outer membrane. Mitochondrial outer membrane protein which regulates mitochondrial organization. It is required for mitochondrial fission and promotes the recruitment and association of the fission mediator dynamin-related protein 1 (DNM1L) to the mitochondrial surface independently of the mitochondrial fission FIS1 and MFF proteins. Regulates DNM1L GTPase activity. This is Mitochondrial dynamics protein MID49 (mief2) from Xenopus laevis (African clawed frog).